The sequence spans 419 residues: Histone acetyltransferase type B subunit 2 (419 aa).

WD repeat units follow at residues 131–171 (PHDG…VEAL), 177–217 (YHTE…KNIK), 225–265 (AHTD…IIHN), 267–307 (NTKK…NPLY), and 311–351 (GHED…AEQT). The segment at 353 to 357 (DEIED) is interaction with the histone H4 N-terminus. Residues 368–408 (GHKTSINDIAVNPNINWLVASAEEDNIVQIWKCSSNIPRIG) form a WD 6 repeat.

It belongs to the WD repeat RBAP46/RBAP48/MSI1 family. As to quaternary structure, component of the HAT-B complex composed of at least HAT1 and HAT2. The HAT-B complex binds to histone H4 tail.

The protein resides in the cytoplasm. It is found in the nucleus. In terms of biological role, regulatory subunit of the histone acetylase B (HAT-B) complex. The complex acetylates Lys-12 of histone H4 which is required for telomeric silencing. The polypeptide is Histone acetyltransferase type B subunit 2 (HAT2) (Candida glabrata (strain ATCC 2001 / BCRC 20586 / JCM 3761 / NBRC 0622 / NRRL Y-65 / CBS 138) (Yeast)).